Here is a 346-residue protein sequence, read N- to C-terminus: WD repeat-containing protein LWD1 (346 aa).

Position 1 is an N-acetylmethionine (Met1). WD repeat units lie at residues 79 to 121 (EHPY…SRVE), 133 to 173 (EFCG…VDTQ), 176 to 214 (AHDK…HSTI), and 265 to 305 (RHQA…QHVE).

Its subcellular location is the nucleus. Functionally, clock protein essential for the proper expression phase and period length of both the oscillator and output genes known to participate in photoperiod sensing. Required for the expression of APRR9, APRR7, and APRR5. Regulated by APRR9 and APRR7 at the transcriptional level, indicating the existence of a positive feedback loop within the circadian clock. May function to delay the expression of the morning genes until dawn approaches. The chain is WD repeat-containing protein LWD1 (LWD1) from Arabidopsis thaliana (Mouse-ear cress).